The sequence spans 115 residues: Ribonuclease P protein component (115 aa).

It belongs to the RnpA family. In terms of assembly, consists of a catalytic RNA component (M1 or rnpB) and a protein subunit.

It catalyses the reaction Endonucleolytic cleavage of RNA, removing 5'-extranucleotides from tRNA precursor.. Its function is as follows. RNaseP catalyzes the removal of the 5'-leader sequence from pre-tRNA to produce the mature 5'-terminus. It can also cleave other RNA substrates such as 4.5S RNA. The protein component plays an auxiliary but essential role in vivo by binding to the 5'-leader sequence and broadening the substrate specificity of the ribozyme. This is Ribonuclease P protein component from Baumannia cicadellinicola subsp. Homalodisca coagulata.